We begin with the raw amino-acid sequence, 1189 residues long: Disabled homolog 2-interacting protein (1189 aa).

The disordered stretch occupies residues 1 to 75 (MSAGGSARKS…EPSAATPFRV (75 aa)). A compositionally biased stretch (basic residues) spans 20–38 (LLRRPRLQRQRSRSRSRTR). Over residues 39–49 (PARESPQERPG) the composition is skewed to basic and acidic residues. Residues 101–202 (SFRHILPGFR…WMENLRRAVH (102 aa)) form the PH domain. Positions 193–311 (WMENLRRAVH…AGRQFVEKWY (119 aa)) constitute a C2 domain. A Ras-GAP domain is found at 387–595 (GKVKDFLTDL…TNMQRFLLEI (209 aa)). Positions 646-943 (LRDVHTALST…RTPPNLLSTL (298 aa)) are necessary for interaction with AKT1. The span at 653–668 (LSTPGSGQLPGTNDLA) shows a compositional bias: polar residues. 2 disordered regions span residues 653-678 (LSTP…SSSI) and 715-742 (RSSG…MANG). The segment covering 669–678 (STPGSGSSSI) has biased composition (low complexity). Positions 715–731 (RSSGVQPSPARSSSYSE) are enriched in polar residues. Position 728 is a phosphoserine; by MAP3K5 and RIPK1 (Ser-728). Phosphoserine is present on Ser-747. Disordered stretches follow at residues 803-823 (AGQT…PQLL), 843-865 (PRGL…NSEE), 895-998 (SLTE…SPNA), 1015-1035 (EDEG…KDEL), and 1164-1189 (RNGI…SSNC). Positions 852 to 865 (EGHSSLSSHSNSEE) are enriched in low complexity. The segment covering 919-931 (QPPPPPPPPPPAP) has biased composition (pro residues). Polar residues-rich tracts occupy residues 938-955 (NLLS…TLAS) and 966-976 (RLRQQSSSSKG). Phosphoserine is present on residues Ser-978 and Ser-995. Over residues 1023–1035 (PPHRDRLRSKDEL) the composition is skewed to basic and acidic residues. Positions 1026-1159 (RDRLRSKDEL…SALTQLKERY (134 aa)) form a coiled coil.

In terms of assembly, on plasma membrane, exists in an inactive form complexed with TNFR1; in response to TNF-alpha, dissociates from TNFR1 complex, translocates to cytoplasm and forms part of an intracellular signaling complex comprising TRADD, RIPK1, TRAF2 and MAP3K5. Interacts with DAB1. Interacts (via NPXY motif) with DAB2 (via PID domain). Interacts (via PH domain) with ERN1. Part of a cytoplasmic complex made of HIPK1, DAB2IP and MAP3K5 in response to TNF-alpha; this complex formation promotes MAP3K5-JNK activation and subsequent apoptosis. Interacts (via N-terminal domain) with JAK2; the interaction occurs in a IFNG/IFN-gamma-dependent manner and inhibits JAK2 autophosphorylation activity. Interacts (via C2 domain) with GSK3B; the interaction stimulates GSK3B kinase activation. Interacts (via C2 domain) with PPP2CA. Interacts (via proline-rich motif) with a regulatory p85 subunit (via SH3 domain) of the PI3K complex; the interaction inhibits the PI3K-AKT complex activity in a TNF-alpha-dependent manner in prostate cancer (PCa) cells. Interacts with AKT1; the interaction is increased in a TNF-alpha-induced manner. Interacts (via C2 domain and active form preferentially) with KDR/VEGFR2 (tyrosine-phosphorylated active form preferentially); the interaction occurs at the late phase of VEGFA response and inhibits KDR/VEGFR2 activity. Interacts (via N-terminus C2 domain) with MAP3K5 ('Ser-966' dephosphorylated form preferentially); the interaction occurs in a TNF-alpha-induced manner. Interacts (via Ras-GAP domain) with the catalytic subunit of protein phosphatase PP2A; the interaction occurs in resting endothelial cells, is further enhanced by TNF-alpha stimulation and is required to bridge PP2A to MAP3K5. Interacts (via C-terminus PER domain) with TRAF2 (via zinc fingers); the interaction occurs in a TNF-alpha-dependent manner. Interacts with 14-3-3 proteins; the interaction occurs in a TNF-alpha-dependent manner. Interacts (via Ras-GAP domain) with RIPK1 (via kinase domain); the interaction occurs in a TNF-alpha-dependent manner. Interacts with RAB40C; acts as a GAP for RAB40C. In terms of processing, in response to TNF-alpha-induction, phosphorylated at Ser-728; phosphorylation leads to a conformational change, and thus, increases its association with 14-3-3 proteins, MAP3K5, RIPK1 and TRAF2 in endothelial cells; also stimulates regulatory p85 subunit sequestring and PI3K-p85 complex activity inhibition. Expressed in endothelial and vascular smooth muscle cells (VSMCs). Expressed in prostate epithelial but poorly in prostate cancer cells. Poorly expressed in medulloblastoma cells compared to cerebellar precursor proliferating progenitor cells (at protein level). Low expression in prostate. Down-regulated in prostate cancer.

Its subcellular location is the cytoplasm. The protein localises to the cell membrane. It is found in the membrane. It localises to the cell projection. The protein resides in the dendrite. Functions as a scaffold protein implicated in the regulation of a large spectrum of both general and specialized signaling pathways. Involved in several processes such as innate immune response, inflammation and cell growth inhibition, apoptosis, cell survival, angiogenesis, cell migration and maturation. Also plays a role in cell cycle checkpoint control; reduces G1 phase cyclin levels resulting in G0/G1 cell cycle arrest. Mediates signal transduction by receptor-mediated inflammatory signals, such as the tumor necrosis factor (TNF), interferon (IFN) or lipopolysaccharide (LPS). Modulates the balance between phosphatidylinositol 3-kinase (PI3K)-AKT-mediated cell survival and apoptosis stimulated kinase (MAP3K5)-JNK signaling pathways; sequesters both AKT1 and MAP3K5 and counterbalances the activity of each kinase by modulating their phosphorylation status in response to pro-inflammatory stimuli. Acts as a regulator of the endoplasmic reticulum (ER) unfolded protein response (UPR) pathway; specifically involved in transduction of the ER stress-response to the JNK cascade through ERN1. Mediates TNF-alpha-induced apoptosis activation by facilitating dissociation of inhibitor 14-3-3 from MAP3K5; recruits the PP2A phosphatase complex which dephosphorylates MAP3K5 on 'Ser-966', leading to the dissociation of 13-3-3 proteins and activation of the MAP3K5-JNK signaling pathway in endothelial cells. Also mediates TNF/TRAF2-induced MAP3K5-JNK activation, while it inhibits CHUK-NF-kappa-B signaling. Acts a negative regulator in the IFN-gamma-mediated JAK-STAT signaling cascade by inhibiting smooth muscle cell (VSMCs) proliferation and intimal expansion, and thus, prevents graft arteriosclerosis (GA). Acts as a GTPase-activating protein (GAP) for the ADP ribosylation factor 6 (ARF6), Ras and RAB40C. Promotes hydrolysis of the ARF6-bound GTP and thus, negatively regulates phosphatidylinositol 4,5-bisphosphate (PIP2)-dependent TLR4-TIRAP-MyD88 and NF-kappa-B signaling pathways in endothelial cells in response to lipopolysaccharides (LPS). Binds specifically to phosphatidylinositol 4-phosphate (PtdIns4P) and phosphatidylinositol 3-phosphate (PtdIns3P). In response to vascular endothelial growth factor (VEGFA), acts as a negative regulator of the VEGFR2-PI3K-mediated angiogenic signaling pathway by inhibiting endothelial cell migration and tube formation. In the developing brain, promotes both the transition from the multipolar to the bipolar stage and the radial migration of cortical neurons from the ventricular zone toward the superficial layer of the neocortex in a glial-dependent locomotion process. Probable downstream effector of the Reelin signaling pathway; promotes Purkinje cell (PC) dendrites development and formation of cerebellar synapses. Also functions as a tumor suppressor protein in prostate cancer progression; prevents cell proliferation and epithelial-to-mesenchymal transition (EMT) through activation of the glycogen synthase kinase-3 beta (GSK3B)-induced beta-catenin and inhibition of PI3K-AKT and Ras-MAPK survival downstream signaling cascades, respectively. The chain is Disabled homolog 2-interacting protein from Homo sapiens (Human).